The chain runs to 1465 residues: DNA polymerase III PolC-type (1465 aa).

Residues 425–581 (YVVFDVETTG…YDAEATGRLL (157 aa)) form the Exonuclease domain.

Belongs to the DNA polymerase type-C family. PolC subfamily.

Its subcellular location is the cytoplasm. The enzyme catalyses DNA(n) + a 2'-deoxyribonucleoside 5'-triphosphate = DNA(n+1) + diphosphate. Its function is as follows. Required for replicative DNA synthesis. This DNA polymerase also exhibits 3' to 5' exonuclease activity. In Streptococcus mutans serotype c (strain ATCC 700610 / UA159), this protein is DNA polymerase III PolC-type.